A 383-amino-acid polypeptide reads, in one-letter code: 8-amino-7-oxononanoate synthase (383 aa).

Position 21 (Arg-21) interacts with substrate. Gly-108–Tyr-109 provides a ligand contact to pyridoxal 5'-phosphate. His-133 lines the substrate pocket. Residues Ser-179, His-207, and Thr-233 each coordinate pyridoxal 5'-phosphate. The residue at position 236 (Lys-236) is an N6-(pyridoxal phosphate)lysine. Thr-350 provides a ligand contact to substrate.

Belongs to the class-II pyridoxal-phosphate-dependent aminotransferase family. BioF subfamily. In terms of assembly, homodimer. It depends on pyridoxal 5'-phosphate as a cofactor.

The enzyme catalyses 6-carboxyhexanoyl-[ACP] + L-alanine + H(+) = (8S)-8-amino-7-oxononanoate + holo-[ACP] + CO2. Its pathway is cofactor biosynthesis; biotin biosynthesis. In terms of biological role, catalyzes the decarboxylative condensation of pimeloyl-[acyl-carrier protein] and L-alanine to produce 8-amino-7-oxononanoate (AON), [acyl-carrier protein], and carbon dioxide. This Yersinia pestis bv. Antiqua (strain Angola) protein is 8-amino-7-oxononanoate synthase.